We begin with the raw amino-acid sequence, 945 residues long: Protein translocase subunit SecA (945 aa).

Residues Q90, 108–112, and D509 contribute to the ATP site; that span reads GEGKT. The segment at 533-568 is disordered; it reads VKPEDGHKPPVPLQRRSESSGFGEDKDVTTDNSKPL. Residues 547 to 561 show a composition bias toward basic and acidic residues; the sequence is RRSESSGFGEDKDVT.

It belongs to the SecA family. As to quaternary structure, monomer and homodimer. Part of the essential Sec protein translocation apparatus which comprises SecA, SecYEG and auxiliary proteins SecDF. Other proteins may also be involved.

The protein localises to the cell inner membrane. The protein resides in the cellular thylakoid membrane. Its subcellular location is the cytoplasm. The catalysed reaction is ATP + H2O + cellular proteinSide 1 = ADP + phosphate + cellular proteinSide 2.. In terms of biological role, part of the Sec protein translocase complex. Interacts with the SecYEG preprotein conducting channel. Has a central role in coupling the hydrolysis of ATP to the transfer of proteins into and across the cell membrane, serving as an ATP-driven molecular motor driving the stepwise translocation of polypeptide chains across the membrane. Its function is as follows. Probably participates in protein translocation into and across both the cytoplasmic and thylakoid membranes in cyanobacterial cells. The protein is Protein translocase subunit SecA of Prochlorococcus marinus (strain MIT 9211).